The chain runs to 380 residues: Pregnancy-associated glycoprotein 6 (380 aa).

Positions 1-15 (MKWLVLLGLVSISEC) are cleaved as a signal peptide. Residues 16 to 53 (IVKIPLRRVKTMRKTLSEKNMLNNFLKEHAYRLSQISF) constitute a propeptide, activation peptide. N-linked (GlcNAc...) asparagine glycosylation is found at Asn57 and Asn74. Residues 71-377 (YLGNITIGTP…DRGHDRIGLA (307 aa)) form the Peptidase A1 domain. Asp89 is a catalytic residue. Cysteines 102 and 107 form a disulfide. N-linked (GlcNAc...) asparagine glycosylation occurs at Asn125. A disulfide bridge links Cys261 with Cys265. The active site involves Asp270. A disulfide bridge links Cys303 with Cys337.

It belongs to the peptidase A1 family. In terms of tissue distribution, trophoblast and placental tissue. Produced specifically in the invasive binucleate cells of the placenta.

The protein resides in the secreted. It is found in the extracellular space. The chain is Pregnancy-associated glycoprotein 6 from Ovis aries (Sheep).